The primary structure comprises 464 residues: PH domain-containing rcdII (464 aa).

Residues 8-210 are a coiled coil; the sequence is KSSKEIIEDL…NTKLMSNLEI (203 aa). Disordered regions lie at residues 215–290 and 317–347; these read NFNN…NSSG and CNNNNNNNNGNSKLSTGVPITRSRSSSSNSN. Composition is skewed to low complexity over residues 234-288, 317-328, and 338-347; these read STTT…SSNS, CNNNNNNNNGNS, and RSRSSSSNSN. In terms of domain architecture, PH spans 353 to 461; the sequence is KIVKEGWLKR…WKDTISSLMP (109 aa).

This Dictyostelium discoideum (Social amoeba) protein is PH domain-containing rcdII (rcdII).